A 252-amino-acid chain; its full sequence is Membrane protein insertase YidC (252 aa).

A signal peptide spans M1 to G20. Residue C21 is the site of N-palmitoyl cysteine attachment. C21 carries S-diacylglycerol cysteine lipidation. The next 5 membrane-spanning stretches (helical) occupy residues Y59 to V79, L129 to I149, F160 to T180, I206 to L226, and L228 to M248.

This sequence belongs to the OXA1/ALB3/YidC family. Type 2 subfamily.

It localises to the cell membrane. Functionally, required for the insertion and/or proper folding and/or complex formation of integral membrane proteins into the membrane. Involved in integration of membrane proteins that insert both dependently and independently of the Sec translocase complex, as well as at least some lipoproteins. This is Membrane protein insertase YidC from Oceanobacillus iheyensis (strain DSM 14371 / CIP 107618 / JCM 11309 / KCTC 3954 / HTE831).